A 344-amino-acid chain; its full sequence is Trace amine-associated receptor 8b (344 aa).

Over 1–31 the chain is Extracellular; that stretch reads MTSNFSQPALQLCYENTNGSCIKTPYSPGPR. Asn4 and Asn18 each carry an N-linked (GlcNAc...) asparagine glycan. Cystine bridges form between Cys21–Cys185 and Cys104–Cys189. A helical transmembrane segment spans residues 32–52; sequence VILYMVFGFGAVLAVCGNLLV. Topologically, residues 53–67 are cytoplasmic; it reads VISVLHFKQLHSPAN. The chain crosses the membrane as a helical span at residues 68–88; sequence FLIASLASADFLVGISVMPFS. Topologically, residues 89–111 are extracellular; that stretch reads MVRSIESCWYFGDAFCSLHSCCD. Residues 112–132 form a helical membrane-spanning segment; the sequence is VAFCYSSALHLCFISVDRYIA. The Cytoplasmic portion of the chain corresponds to 133–146; it reads VTDPLVYPTKFTVS. A helical membrane pass occupies residues 147 to 167; that stretch reads VSGICISISWILPLVYSSAVF. The Extracellular portion of the chain corresponds to 168–195; it reads YTGISAKGIESLVSALNCVGGCQIVVNQ. The helical transmembrane segment at 196–216 threads the bilayer; it reads DWVLIDFLLFFIPTLVMIILY. Residues 217-260 lie on the Cytoplasmic side of the membrane; sequence SKIFLVAKQQAVKIETSVSDNRGESSSESHKARVAKRERKAAKT. The chain crosses the membrane as a helical span at residues 261–281; the sequence is LGVTVVAFMVSWLPYTIDSLV. Residue Asp282 is a topological domain, extracellular. A helical transmembrane segment spans residues 283–303; that stretch reads AFVGFITPAYVYEICCWSAYY. The Cytoplasmic segment spans residues 304-344; that stretch reads NSAMNPLIYAFFYPWFRKAIKLILSGEILKSHSSTMSLFSE.

It belongs to the G-protein coupled receptor 1 family. In terms of tissue distribution, specifically expressed in neurons of the olfactory epithelium.

The protein localises to the cell membrane. Its function is as follows. Olfactory receptor specific for trace amines. Trace amine compounds are enriched in animal body fluids and act on trace amine-associated receptors (TAARs) to elicit both intraspecific and interspecific innate behaviors. Ligand-binding causes a conformation change that triggers signaling via G alpha proteins, possibly G(i)/G(o) G alpha proteins. The chain is Trace amine-associated receptor 8b from Mus musculus (Mouse).